We begin with the raw amino-acid sequence, 293 residues long: Phospholipid scramblase 2 (293 aa).

Positions 1–39 (MDKQNVQMNPPHPGTNLTGPPGHIGYPGPQAGYAVPPPG) are disordered. The proline-rich domain (PRD) stretch occupies residues 1-66 (MDKQNVQMNP…GHPGAPTQVP (66 aa)). The Cytoplasmic segment spans residues 1-270 (MDKQNVQMNP…IQFPLDLDVK (270 aa)). At T143 the chain carries Phosphothreonine; by PKC. 4 S-palmitoyl cysteine lipidation sites follow: C166, C167, C170, and C171. A helical transmembrane segment spans residues 271-287 (MKAVMLGACFLIDFMFF). Residues 288-293 (EMTRGE) are Extracellular-facing.

Belongs to the phospholipid scramblase family. The cofactor is Ca(2+).

The protein resides in the membrane. It catalyses the reaction a 1,2-diacyl-sn-glycero-3-phosphocholine(in) = a 1,2-diacyl-sn-glycero-3-phosphocholine(out). Its function is as follows. May catalyze calcium-induced ATP-independent rapid bidirectional and non-specific movement of phospholipids (lipid scrambling or lipid flip-flop) between the inner and outer leaflet of the plasma membrane. This Bos taurus (Bovine) protein is Phospholipid scramblase 2.